Consider the following 137-residue polypeptide: Large ribosomal subunit protein uL16 (137 aa).

Belongs to the universal ribosomal protein uL16 family. As to quaternary structure, part of the 50S ribosomal subunit.

Functionally, binds 23S rRNA and is also seen to make contacts with the A and possibly P site tRNAs. This is Large ribosomal subunit protein uL16 from Sorangium cellulosum (strain So ce56) (Polyangium cellulosum (strain So ce56)).